Reading from the N-terminus, the 178-residue chain is Large ribosomal subunit protein uL6 (178 aa).

This sequence belongs to the universal ribosomal protein uL6 family. Part of the 50S ribosomal subunit.

Functionally, this protein binds to the 23S rRNA, and is important in its secondary structure. It is located near the subunit interface in the base of the L7/L12 stalk, and near the tRNA binding site of the peptidyltransferase center. The protein is Large ribosomal subunit protein uL6 of Tropheryma whipplei (strain TW08/27) (Whipple's bacillus).